The primary structure comprises 141 residues: Hemoglobin subunit alpha-A (141 aa).

One can recognise a Globin domain in the interval 1 to 141 (VLNAGDKANV…VGTVLTSKYR (141 aa)). Residue His58 coordinates O2. Position 87 (His87) interacts with heme b.

The protein belongs to the globin family. As to quaternary structure, heterotetramer of two alpha chains and two beta chains. In terms of tissue distribution, red blood cells.

In terms of biological role, involved in oxygen transport from the lung to the various peripheral tissues. This is Hemoglobin subunit alpha-A (HBAA) from Chrysemys picta bellii (Western painted turtle).